The sequence spans 248 residues: NH(3)-dependent NAD(+) synthetase (248 aa).

30 to 37 is a binding site for ATP; the sequence is GLSGGIDS. Mg(2+) is bound at residue Asp36. Arg114 is a binding site for deamido-NAD(+). ATP is bound at residue Thr134. Glu139 lines the Mg(2+) pocket. Lys147 and Asp154 together coordinate deamido-NAD(+). Residues Lys163 and Thr185 each coordinate ATP. 232–233 serves as a coordination point for deamido-NAD(+); it reads HK.

Belongs to the NAD synthetase family. As to quaternary structure, homodimer.

The catalysed reaction is deamido-NAD(+) + NH4(+) + ATP = AMP + diphosphate + NAD(+) + H(+). The protein operates within cofactor biosynthesis; NAD(+) biosynthesis; NAD(+) from deamido-NAD(+) (ammonia route): step 1/1. In terms of biological role, catalyzes the ATP-dependent amidation of deamido-NAD to form NAD. Uses ammonia as a nitrogen source. The chain is NH(3)-dependent NAD(+) synthetase from Mycoplasma genitalium (strain ATCC 33530 / DSM 19775 / NCTC 10195 / G37) (Mycoplasmoides genitalium).